A 200-amino-acid polypeptide reads, in one-letter code: NAD(P)H dehydrogenase (quinone) (200 aa).

The Flavodoxin-like domain occupies 7-199; sequence LAIVFYSSTG…RQVELTAKLL (193 aa). FMN contacts are provided by residues 13-18, 86-88, 121-127, and His-142; these read SSTGTG, TRF, and SAQNVNG.

The protein belongs to the WrbA family. Homotetramer. The cofactor is FMN.

It carries out the reaction a quinone + NADH + H(+) = a quinol + NAD(+). It catalyses the reaction a quinone + NADPH + H(+) = a quinol + NADP(+). This chain is NAD(P)H dehydrogenase (quinone), found in Deinococcus radiodurans (strain ATCC 13939 / DSM 20539 / JCM 16871 / CCUG 27074 / LMG 4051 / NBRC 15346 / NCIMB 9279 / VKM B-1422 / R1).